The chain runs to 505 residues: Maturase K (505 aa).

Belongs to the intron maturase 2 family. MatK subfamily.

It localises to the plastid. The protein localises to the chloroplast. In terms of biological role, usually encoded in the trnK tRNA gene intron. Probably assists in splicing its own and other chloroplast group II introns. The sequence is that of Maturase K from Illicium oligandrum (Star anise).